A 338-amino-acid polypeptide reads, in one-letter code: Ketol-acid reductoisomerase (NADP(+)) (338 aa).

Residues 1–181 (MKVFYDKDCD…GGGKAGIIET (181 aa)) enclose the KARI N-terminal Rossmann domain. Residues 24–27 (YGSQ), Arg-47, and Ser-52 each bind NADP(+). His-107 is an active-site residue. Position 133 (Gly-133) interacts with NADP(+). Residues 182 to 327 (TFREETETDL…EKLRAMMPWI (146 aa)) form the KARI C-terminal knotted domain. 4 residues coordinate Mg(2+): Asp-190, Glu-194, Glu-226, and Glu-230. Ser-251 lines the substrate pocket.

This sequence belongs to the ketol-acid reductoisomerase family. The cofactor is Mg(2+).

The catalysed reaction is (2R)-2,3-dihydroxy-3-methylbutanoate + NADP(+) = (2S)-2-acetolactate + NADPH + H(+). It carries out the reaction (2R,3R)-2,3-dihydroxy-3-methylpentanoate + NADP(+) = (S)-2-ethyl-2-hydroxy-3-oxobutanoate + NADPH + H(+). It functions in the pathway amino-acid biosynthesis; L-isoleucine biosynthesis; L-isoleucine from 2-oxobutanoate: step 2/4. The protein operates within amino-acid biosynthesis; L-valine biosynthesis; L-valine from pyruvate: step 2/4. In terms of biological role, involved in the biosynthesis of branched-chain amino acids (BCAA). Catalyzes an alkyl-migration followed by a ketol-acid reduction of (S)-2-acetolactate (S2AL) to yield (R)-2,3-dihydroxy-isovalerate. In the isomerase reaction, S2AL is rearranged via a Mg-dependent methyl migration to produce 3-hydroxy-3-methyl-2-ketobutyrate (HMKB). In the reductase reaction, this 2-ketoacid undergoes a metal-dependent reduction by NADPH to yield (R)-2,3-dihydroxy-isovalerate. This chain is Ketol-acid reductoisomerase (NADP(+)), found in Albidiferax ferrireducens (strain ATCC BAA-621 / DSM 15236 / T118) (Rhodoferax ferrireducens).